The following is a 240-amino-acid chain: Aliphatic sulfonates import ATP-binding protein SsuB (240 aa).

Positions 6–227 (IQLSKLRKNF…VKDRHFACFE (222 aa)) constitute an ABC transporter domain. An ATP-binding site is contributed by 38 to 45 (GESGCGKS).

It belongs to the ABC transporter superfamily. Aliphatic sulfonates importer (TC 3.A.1.17.2) family. In terms of assembly, the complex is composed of two ATP-binding proteins (SsuB), two transmembrane proteins (SsuC) and a solute-binding protein (SsuA).

The protein resides in the cell inner membrane. The enzyme catalyses ATP + H2O + aliphatic sulfonate-[sulfonate-binding protein]Side 1 = ADP + phosphate + aliphatic sulfonateSide 2 + [sulfonate-binding protein]Side 1.. In terms of biological role, part of the ABC transporter complex SsuABC involved in aliphatic sulfonates import. Responsible for energy coupling to the transport system. This chain is Aliphatic sulfonates import ATP-binding protein SsuB, found in Zymomonas mobilis subsp. mobilis (strain ATCC 31821 / ZM4 / CP4).